A 394-amino-acid polypeptide reads, in one-letter code: Elongation factor Tu (394 aa).

In terms of domain architecture, tr-type G spans 10-204 (KEHANIGTIG…AVDDYIPTPE (195 aa)). Residues 19-26 (GHVDHGKT) are G1. 19-26 (GHVDHGKT) contributes to the GTP binding site. Position 26 (threonine 26) interacts with Mg(2+). The tract at residues 60-64 (GITIN) is G2. The tract at residues 81-84 (DCPG) is G3. Residues 81–85 (DCPGH) and 136–139 (NKVD) contribute to the GTP site. The tract at residues 136-139 (NKVD) is G4. The segment at 174–176 (SAL) is G5.

Belongs to the TRAFAC class translation factor GTPase superfamily. Classic translation factor GTPase family. EF-Tu/EF-1A subfamily. As to quaternary structure, monomer.

The protein resides in the cytoplasm. It catalyses the reaction GTP + H2O = GDP + phosphate + H(+). In terms of biological role, GTP hydrolase that promotes the GTP-dependent binding of aminoacyl-tRNA to the A-site of ribosomes during protein biosynthesis. This chain is Elongation factor Tu, found in Staphylococcus haemolyticus (strain JCSC1435).